The chain runs to 37 residues: Photosystem II reaction center protein T (37 aa).

Residues 3-23 (ALVYTFLLVSTLGILFFAIFF) form a helical membrane-spanning segment.

The protein belongs to the PsbT family. As to quaternary structure, PSII is composed of 1 copy each of membrane proteins PsbA, PsbB, PsbC, PsbD, PsbE, PsbF, PsbH, PsbI, PsbJ, PsbK, PsbL, PsbM, PsbT, PsbY, PsbZ, Psb30/Ycf12, at least 3 peripheral proteins of the oxygen-evolving complex and a large number of cofactors. It forms dimeric complexes.

Its subcellular location is the plastid. It is found in the chloroplast thylakoid membrane. Functionally, found at the monomer-monomer interface of the photosystem II (PS II) dimer, plays a role in assembly and dimerization of PSII. PSII is a light-driven water plastoquinone oxidoreductase, using light energy to abstract electrons from H(2)O, generating a proton gradient subsequently used for ATP formation. The chain is Photosystem II reaction center protein T from Ephedra sinica (Chinese ephedra).